A 206-amino-acid chain; its full sequence is Small ribosomal subunit protein uS4 (206 aa).

An S4 RNA-binding domain is found at 94–156; it reads RRLDNVVYRL…SRRRMYFKNL (63 aa).

It belongs to the universal ribosomal protein uS4 family. In terms of assembly, part of the 30S ribosomal subunit. Contacts protein S5. The interaction surface between S4 and S5 is involved in control of translational fidelity.

Its function is as follows. One of the primary rRNA binding proteins, it binds directly to 16S rRNA where it nucleates assembly of the body of the 30S subunit. Functionally, with S5 and S12 plays an important role in translational accuracy. This Roseiflexus castenholzii (strain DSM 13941 / HLO8) protein is Small ribosomal subunit protein uS4.